We begin with the raw amino-acid sequence, 356 residues long: uncharacterized protein (356 aa).

6 helical membrane-spanning segments follow: residues 2 to 22, 36 to 56, 77 to 97, 99 to 119, 124 to 144, and 154 to 174; these read FEAI…FHRL, YVTV…VPIF, MFYT…IGDY, IITA…GPFL, IISL…LSLI, and LFLI…FVDI. In terms of domain architecture, GGDEF spans 218–353; the sequence is QSLGLLLIDI…GRNQVMFNPI (136 aa).

It is found in the cell membrane. This is an uncharacterized protein from Staphylococcus saprophyticus subsp. saprophyticus (strain ATCC 15305 / DSM 20229 / NCIMB 8711 / NCTC 7292 / S-41).